The following is a 162-amino-acid chain: tRNA (cytidine(34)-2'-O)-methyltransferase (162 aa).

Residues Leu-83, Gly-105, Ile-127, and Ser-135 each contribute to the S-adenosyl-L-methionine site.

This sequence belongs to the class IV-like SAM-binding methyltransferase superfamily. RNA methyltransferase TrmH family. TrmL subfamily. In terms of assembly, homodimer.

It localises to the cytoplasm. It catalyses the reaction cytidine(34) in tRNA + S-adenosyl-L-methionine = 2'-O-methylcytidine(34) in tRNA + S-adenosyl-L-homocysteine + H(+). The enzyme catalyses 5-carboxymethylaminomethyluridine(34) in tRNA(Leu) + S-adenosyl-L-methionine = 5-carboxymethylaminomethyl-2'-O-methyluridine(34) in tRNA(Leu) + S-adenosyl-L-homocysteine + H(+). In terms of biological role, methylates the ribose at the nucleotide 34 wobble position in the two leucyl isoacceptors tRNA(Leu)(CmAA) and tRNA(Leu)(cmnm5UmAA). Catalyzes the methyl transfer from S-adenosyl-L-methionine to the 2'-OH of the wobble nucleotide. In Yersinia pestis, this protein is tRNA (cytidine(34)-2'-O)-methyltransferase.